We begin with the raw amino-acid sequence, 146 residues long: UPF0178 protein BT9727_2823 (146 aa).

This sequence belongs to the UPF0178 family.

In Bacillus thuringiensis subsp. konkukian (strain 97-27), this protein is UPF0178 protein BT9727_2823.